The primary structure comprises 342 residues: Phospho-N-acetylmuramoyl-pentapeptide-transferase (342 aa).

10 helical membrane passes run 8–28 (VAQPYFCSFLLSTILGFVIAP), 58–78 (GIPSMGGVIILLPCILSTAIF), 86–106 (IWVILTTMVAFAILGGVDDYL), 116–136 (ISLEAKLFAQLLIASAALIFL), 152–172 (GLIDLGWAYMPFAYIVVVGSS), 184–204 (LATLPIITSTAILGIIGHLSL), 213–233 (VVGANIPIFCSALVGSALSFL), 242–262 (VFMGDLGSLSLGASLGLMSVM), 267–287 (FIYAISGCIFVAEAISSMAQV), and 318–338 (IVTRAWVIAMVSFVVSLAAII).

This sequence belongs to the glycosyltransferase 4 family. MraY subfamily. Mg(2+) serves as cofactor.

The protein localises to the cell inner membrane. It catalyses the reaction UDP-N-acetyl-alpha-D-muramoyl-L-alanyl-gamma-D-glutamyl-meso-2,6-diaminopimeloyl-D-alanyl-D-alanine + di-trans,octa-cis-undecaprenyl phosphate = di-trans,octa-cis-undecaprenyl diphospho-N-acetyl-alpha-D-muramoyl-L-alanyl-D-glutamyl-meso-2,6-diaminopimeloyl-D-alanyl-D-alanine + UMP. It participates in cell wall biogenesis; peptidoglycan biosynthesis. In terms of biological role, catalyzes the initial step of the lipid cycle reactions in the biosynthesis of the cell wall peptidoglycan: transfers peptidoglycan precursor phospho-MurNAc-pentapeptide from UDP-MurNAc-pentapeptide onto the lipid carrier undecaprenyl phosphate, yielding undecaprenyl-pyrophosphoryl-MurNAc-pentapeptide, known as lipid I. In Anaplasma marginale (strain Florida), this protein is Phospho-N-acetylmuramoyl-pentapeptide-transferase.